The chain runs to 196 residues: Beta-crystallin A4 (196 aa).

Position 2 is an N-acetylthreonine (Thr-2). An N-terminal arm region spans residues 2-11; it reads TLQCTKSAGP. Beta/gamma crystallin 'Greek key' domains follow at residues 12-51 and 52-98; these read WKMV…KVLS and GAWV…RPAA. Positions 99 to 104 are connecting peptide; the sequence is CANHRD. Beta/gamma crystallin 'Greek key' domains lie at 105-146 and 147-195; these read SRLT…HVHS and GAWV…RRIQ.

Belongs to the beta/gamma-crystallin family. Homo/heterodimer, or complexes of higher-order. The structure of beta-crystallin oligomers seems to be stabilized through interactions between the N-terminal arms.

Its function is as follows. Crystallins are the dominant structural components of the vertebrate eye lens. This Homo sapiens (Human) protein is Beta-crystallin A4 (CRYBA4).